A 497-amino-acid chain; its full sequence is Probable cytosol aminopeptidase (497 aa).

Residues Lys263 and Asp268 each contribute to the Mn(2+) site. The active site involves Lys275. 3 residues coordinate Mn(2+): Asp286, Asp345, and Glu347. Arg349 is an active-site residue.

It belongs to the peptidase M17 family. It depends on Mn(2+) as a cofactor.

The protein localises to the cytoplasm. The enzyme catalyses Release of an N-terminal amino acid, Xaa-|-Yaa-, in which Xaa is preferably Leu, but may be other amino acids including Pro although not Arg or Lys, and Yaa may be Pro. Amino acid amides and methyl esters are also readily hydrolyzed, but rates on arylamides are exceedingly low.. It catalyses the reaction Release of an N-terminal amino acid, preferentially leucine, but not glutamic or aspartic acids.. Presumably involved in the processing and regular turnover of intracellular proteins. Catalyzes the removal of unsubstituted N-terminal amino acids from various peptides. This Methylorubrum extorquens (strain CM4 / NCIMB 13688) (Methylobacterium extorquens) protein is Probable cytosol aminopeptidase.